A 470-amino-acid polypeptide reads, in one-letter code: Uronate isomerase (470 aa).

It belongs to the metallo-dependent hydrolases superfamily. Uronate isomerase family.

It carries out the reaction D-glucuronate = D-fructuronate. It catalyses the reaction aldehydo-D-galacturonate = keto-D-tagaturonate. It participates in carbohydrate metabolism; pentose and glucuronate interconversion. This is Uronate isomerase from Escherichia coli O8 (strain IAI1).